The primary structure comprises 589 residues: Polypeptide N-acetylgalactosaminyltransferase 4 (589 aa).

The Cytoplasmic portion of the chain corresponds to 1–11 (MLPRMLKMKTV). Residues 12 to 31 (GTVLAVIWLFGLAFIYVQST) traverse the membrane as a helical; Signal-anchor for type II membrane protein segment. Residues 32–589 (SSSLRPPGRH…WIFEKLDTYE (558 aa)) lie on the Lumenal side of the membrane. Positions 33–73 (SSLRPPGRHPPPLPQLDPLIPQNPPQNDEIRPKKSAPPIPT) are disordered. 5 cysteine pairs are disulfide-bonded: Cys140/Cys369, Cys360/Cys438, Cys471/Cys488, Cys514/Cys531, and Cys553/Cys571. Residues 150 to 255 (MQPTTVIITY…QKWLEPLLAR (106 aa)) are catalytic subdomain A. Positions 191 and 216 each coordinate substrate. Position 239 (Asp239) interacts with Mn(2+). Ser240 lines the substrate pocket. Position 241 (His241) interacts with Mn(2+). A catalytic subdomain B region spans residues 315 to 377 (PIRSPTMAGG…PCSRVGHVFR (63 aa)). Trp346 provides a ligand contact to substrate. Position 374 (His374) interacts with Mn(2+). Positions 377, 380, and 382 each coordinate substrate. In terms of domain architecture, Ricin B-type lectin spans 458 to 589 (TPGKSFQMKI…WIFEKLDTYE (132 aa)). Asn523 is a glycosylation site (N-linked (GlcNAc...) asparagine).

This sequence belongs to the glycosyltransferase 2 family. GalNAc-T subfamily. Requires Mn(2+) as cofactor.

The protein resides in the golgi apparatus membrane. It catalyses the reaction L-seryl-[protein] + UDP-N-acetyl-alpha-D-galactosamine = a 3-O-[N-acetyl-alpha-D-galactosaminyl]-L-seryl-[protein] + UDP + H(+). It carries out the reaction L-threonyl-[protein] + UDP-N-acetyl-alpha-D-galactosamine = a 3-O-[N-acetyl-alpha-D-galactosaminyl]-L-threonyl-[protein] + UDP + H(+). The protein operates within protein modification; protein glycosylation. Functionally, catalyzes the initial reaction in O-linked oligosaccharide biosynthesis, the transfer of an N-acetyl-D-galactosamine residue to a serine or threonine residue on the protein receptor. This Caenorhabditis elegans protein is Polypeptide N-acetylgalactosaminyltransferase 4 (gly-4).